The sequence spans 248 residues: Sugar fermentation stimulation protein homolog (248 aa).

This sequence belongs to the SfsA family.

This is Sugar fermentation stimulation protein homolog from Prochlorococcus marinus subsp. pastoris (strain CCMP1986 / NIES-2087 / MED4).